We begin with the raw amino-acid sequence, 736 residues long: Elongation factor 2 (736 aa).

The tr-type G domain occupies 19 to 262 (DQIRNIGIIA…MVIKFVPNPR (244 aa)). GTP is bound by residues 28–35 (AHVDHGKT), 94–98 (DTPGH), and 148–151 (NKVD). Residue His602 is modified to Diphthamide.

This sequence belongs to the TRAFAC class translation factor GTPase superfamily. Classic translation factor GTPase family. EF-G/EF-2 subfamily.

Its subcellular location is the cytoplasm. Catalyzes the GTP-dependent ribosomal translocation step during translation elongation. During this step, the ribosome changes from the pre-translocational (PRE) to the post-translocational (POST) state as the newly formed A-site-bound peptidyl-tRNA and P-site-bound deacylated tRNA move to the P and E sites, respectively. Catalyzes the coordinated movement of the two tRNA molecules, the mRNA and conformational changes in the ribosome. The polypeptide is Elongation factor 2 (fusA) (Aeropyrum pernix (strain ATCC 700893 / DSM 11879 / JCM 9820 / NBRC 100138 / K1)).